A 409-amino-acid polypeptide reads, in one-letter code: Wadjet protein JetD (409 aa).

Its function is as follows. Component of antiplasmid transformation system Wadjet type I, composed of JetA, JetB, JetC and JetD. Expression of Wadjet type I in B.subtilis (strain BEST7003) reduces the transformation efficiency of plasmid pHCMC05. The protein is Wadjet protein JetD of Bacillus cereus (strain Q1).